Here is a 686-residue protein sequence, read N- to C-terminus: Leucine-rich repeat-containing protein 49 (686 aa).

LRR repeat units follow at residues 113-134, 135-156, 157-178, 179-200, 201-222, 223-244, and 245-266; these read HLRL…SNLQ, RLIF…STLK, SLRV…ENLK, NLDV…NHLC, DLRV…NGLD, SLTE…DNLP, and CLQR…SCLA. Residues 279–317 form the LRRCT domain; the sequence is NPIAQESWYKHTVLQNMMQLRQLDMKRITEEERRVASVV. Disordered stretches follow at residues 311-332 and 359-381; these read RRVA…HKQS and ASTQ…DGGN. Residues 319–341 are a coiled coil; that stretch reads KKEEEKKRESHKQSLLKEKKRLT.

As to quaternary structure, part of the neuronal tubulin polyglutamylase complex which contains TPGS1, TPGS2, TTLL1, LRRC49 and NICN1. Interacts with PCM1; TTLL1, TPGS1, TPGS2 and LRRC49.

It localises to the cytoplasm. The protein resides in the cytoskeleton. Its subcellular location is the microtubule organizing center. It is found in the centrosome. The protein localises to the centriolar satellite. Functionally, subunit of the tubulin polyglutamylase complex (TPGC). The complex mediates cilia and flagella polyglutamylation which is essential for their biogenesis and motility. This chain is Leucine-rich repeat-containing protein 49 (Lrrc49), found in Mus musculus (Mouse).